A 600-amino-acid polypeptide reads, in one-letter code: Leiomodin-1 (600 aa).

The residue at position 12 (Ser-12) is a Phosphoserine. 3 disordered regions span residues 38–61 (VVDPDGSVPVGLRQRNQTEKQSTG), 80–324 (MQRE…PLER), and 472–573 (DKQR…QEKN). Composition is skewed to basic and acidic residues over residues 80 to 127 (MQRE…EPKR), 134 to 240 (FSRD…EKMK), 247 to 256 (DMKKEDEKVK), 263 to 292 (DTKKDDEKVKKNEPLHEKEAKDDSKTKTPE), and 472 to 497 (DKQRQKRLQEQRQAQEAKGEKKDLLE). A phosphoserine mark is found at Ser-85 and Ser-135. 8 tandem repeats follow at residues 165-180 (AAVDKKEAGKDGRGEE), 181-196 (RAVATKKEEEKKGSDR), 197-212 (NTGLSRDKDKKREEMK), 213-228 (EVAKKEDDEKVKGERR), 229-244 (NTDTRKEGEKMKRAGG), 245-260 (NTDMKKEDEKVKRGTG), 261-276 (NTDTKKDDEKVKKNEP), and 277-293 (LHEKEAKDDSKTKTPEK). The interval 165 to 293 (AAVDKKEAGK…DDSKTKTPEK (129 aa)) is 8 X approximate tandem repeats. The segment at 508 to 527 (SPKPSPQPSPKPSPKNSPKK) is 5 X 4 AA approximate tandem repeats. Pro residues-rich tracts occupy residues 510-522 (KPSPQPSPKPSPK) and 532-543 (AAPPPPPPPLAP). Position 555 is a phosphoserine (Ser-555). Residues 574 to 593 (SRDQLLAAIRSSNLKQLKKV) form the WH2 domain.

This sequence belongs to the tropomodulin family. Detected in lung vascular smooth muscle (at protein level). Detected in thyroid and extraocular smooth muscle, but not skeletal muscle. Detected in heart, aorta, skeletal muscle, colon, urinary bladder, uterus, stomach, and small intestine.

It localises to the cytoplasm. It is found in the myofibril. The protein localises to the sarcomere. Its subcellular location is the cytoskeleton. Functionally, required for proper contractility of visceral smooth muscle cells. Mediates nucleation of actin filaments. The sequence is that of Leiomodin-1 (LMOD1) from Homo sapiens (Human).